Consider the following 245-residue polypeptide: 1-(5-phosphoribosyl)-5-[(5-phosphoribosylamino)methylideneamino] imidazole-4-carboxamide isomerase (245 aa).

Asp8 acts as the Proton acceptor in catalysis. The active-site Proton donor is Asp131.

Belongs to the HisA/HisF family.

The protein resides in the cytoplasm. The enzyme catalyses 1-(5-phospho-beta-D-ribosyl)-5-[(5-phospho-beta-D-ribosylamino)methylideneamino]imidazole-4-carboxamide = 5-[(5-phospho-1-deoxy-D-ribulos-1-ylimino)methylamino]-1-(5-phospho-beta-D-ribosyl)imidazole-4-carboxamide. The protein operates within amino-acid biosynthesis; L-histidine biosynthesis; L-histidine from 5-phospho-alpha-D-ribose 1-diphosphate: step 4/9. The polypeptide is 1-(5-phosphoribosyl)-5-[(5-phosphoribosylamino)methylideneamino] imidazole-4-carboxamide isomerase (Neisseria gonorrhoeae (strain ATCC 700825 / FA 1090)).